We begin with the raw amino-acid sequence, 1222 residues long: BOS complex subunit NOMO3 (1222 aa).

The first 31 residues, 1–31 (MLVGQGAGPLGPAVVTAAVVLLLSGVGPAHG), serve as a signal peptide directing secretion. At 32 to 1155 (SEDIVVGCGG…NPTRKLPEQD (1124 aa)) the chain is on the extracellular side. N-linked (GlcNAc...) asparagine glycosylation is found at Asn50, Asn218, and Asn618. The chain crosses the membrane as a helical span at residues 1156 to 1176 (IAQGSYIALPLTLLVLLAGYN). The Cytoplasmic portion of the chain corresponds to 1177–1222 (HDKLIPLLLQLTSRLQGVGALGQAASDNSGPEDAKRQAKKQKTRRT). A disordered region spans residues 1198–1222 (GQAASDNSGPEDAKRQAKKQKTRRT). Residues 1213 to 1222 (QAKKQKTRRT) show a composition bias toward basic residues.

As to quaternary structure, component of the back of Sec61 (BOS) complex, composed of NCLN/Nicalin, NOMO (NOMO1, NOMO2 or NOMO3) and TMEM147. The BOS complex is part of the multi-pass translocon (MPT) complex, composed of three subcomplexes, the GEL complex (composed of RAB5IF/OPTI and TMCO1), the BOS complex (composed of NCLN/Nicalin, NOMO and TMEM147) and the PAT complex (composed of WDR83OS/Asterix and CCDC47). The MPT complex associates with the SEC61 complex. Due to the strong similarity between NOMO1, NOMO2 and NOMO3, similar interaction pattern probably occur for the three gene copies.

Its subcellular location is the endoplasmic reticulum membrane. Its function is as follows. Component of the multi-pass translocon (MPT) complex that mediates insertion of multi-pass membrane proteins into the lipid bilayer of membranes. The MPT complex takes over after the SEC61 complex: following membrane insertion of the first few transmembrane segments of proteins by the SEC61 complex, the MPT complex occludes the lateral gate of the SEC61 complex to promote insertion of subsequent transmembrane regions. This chain is BOS complex subunit NOMO3 (NOMO3), found in Homo sapiens (Human).